The primary structure comprises 358 residues: Pyruvate dehydrogenase E1 component subunit alpha (358 aa).

Heterodimer of an alpha and a beta chain. The cofactor is thiamine diphosphate.

It carries out the reaction N(6)-[(R)-lipoyl]-L-lysyl-[protein] + pyruvate + H(+) = N(6)-[(R)-S(8)-acetyldihydrolipoyl]-L-lysyl-[protein] + CO2. Functionally, the pyruvate dehydrogenase complex catalyzes the overall conversion of pyruvate to acetyl-CoA and CO(2). It contains multiple copies of three enzymatic components: pyruvate dehydrogenase (E1), dihydrolipoamide acetyltransferase (E2) and lipoamide dehydrogenase (E3). The protein is Pyruvate dehydrogenase E1 component subunit alpha (pdhA) of Mycoplasma genitalium (strain ATCC 33530 / DSM 19775 / NCTC 10195 / G37) (Mycoplasmoides genitalium).